The primary structure comprises 548 residues: mRNA cleavage and polyadenylation factor CLP1 (548 aa).

ATP contacts are provided by residues E19, K60, and 123–128; that span reads SSGKTT. A compositionally biased stretch (basic and acidic residues) spans 437–481; sequence ESEVKEEVKEEKNEKDGEIKQDGEGEKKGEGKGEGEGEGEGKYGE. Positions 437 to 500 are disordered; sequence ESEVKEEVKE…DEEEVPFREE (64 aa). Over residues 482 to 494 the composition is skewed to acidic residues; it reads EEGEAEGEDDEEE.

It belongs to the Clp1 family. Clp1 subfamily. In terms of assembly, component of a pre-mRNA cleavage factor complex. Interacts directly with PCF11.

Its subcellular location is the nucleus. Its function is as follows. Required for endonucleolytic cleavage during polyadenylation-dependent pre-mRNA 3'-end formation. The sequence is that of mRNA cleavage and polyadenylation factor CLP1 from Cryptococcus neoformans var. neoformans serotype D (strain B-3501A) (Filobasidiella neoformans).